Here is a 271-residue protein sequence, read N- to C-terminus: Elongation factor Ts (271 aa).

Residues 76–79 (TDFV) are involved in Mg(2+) ion dislocation from EF-Tu.

Belongs to the EF-Ts family.

The protein localises to the cytoplasm. Functionally, associates with the EF-Tu.GDP complex and induces the exchange of GDP to GTP. It remains bound to the aminoacyl-tRNA.EF-Tu.GTP complex up to the GTP hydrolysis stage on the ribosome. The sequence is that of Elongation factor Ts from Saccharopolyspora erythraea (strain ATCC 11635 / DSM 40517 / JCM 4748 / NBRC 13426 / NCIMB 8594 / NRRL 2338).